The primary structure comprises 642 residues: Uromodulin (642 aa).

Residues 1–24 (MGIPLTWMLLVMMVTSWFTLAEAS) form the signal peptide. N-linked (GlcNAc...) asparagine glycans are attached at residues Asn-25 and Asn-38. The 37-residue stretch at 28–64 (EARRCSECHNNATCTVDGVVTTCSCQTGFTGDGLVCE) folds into the EGF-like 1 domain. 21 disulfide bridges follow: Cys-32-Cys-41, Cys-35-Cys-50, Cys-52-Cys-63, Cys-69-Cys-82, Cys-77-Cys-91, Cys-93-Cys-105, Cys-111-Cys-125, Cys-119-Cys-134, Cys-136-Cys-147, Cys-149-Cys-160, Cys-154-Cys-171, Cys-175-Cys-268, Cys-196-Cys-283, Cys-218-Cys-256, Cys-224-Cys-288, Cys-249-Cys-257, Cys-298-Cys-307, Cys-301-Cys-316, Cys-318-Cys-348, Cys-336-Cys-426, and Cys-367-Cys-390. The EGF-like 2; calcium-binding domain occupies 65–106 (DMDECATPWTHNCSNSSCVNTPGSFKCSCQDGFRLTPELSCT). N-linked (GlcNAc...) asparagine glycans are attached at residues Asn-76 and Asn-79. One can recognise an EGF-like 3; calcium-binding domain in the interval 107-148 (DVDECSEQGLSNCHALATCVNTEGDYLCVCPEGFTGDGWYCE). Positions 149–172 (CSPGSCEPGLDCLPQGPDGKLVCQ) are beta hairpin. Residues 173–292 (DPCNTYETLT…CNLAYCTDPS (120 aa)) form a D10C region. Asn-233 carries an N-linked (GlcNAc...) asparagine glycan. N-linked (GlcNAc...) asparagine glycosylation is present at Asn-276. The region spanning 293–324 (SVEGTCEECRVDEDCISDNGRWRCQCKQDSNI) is the EGF-like 4 domain. The N-linked (GlcNAc...) asparagine glycan is linked to Asn-323. The interval 335–430 (ECGANDIKMS…RMNFECSYPL (96 aa)) is ZP-N. The ZP domain occupies 335–590 (ECGANDIKMS…PTCSGTRFRS (256 aa)). 2 N-linked (GlcNAc...) asparagine glycosylation sites follow: Asn-397 and Asn-448. The segment at 431–454 (DMKVSLKTSLQPMVSALNISLGGT) is flexible ZP-N/ZP-C linker; important for secretion and polymerization into filaments. The interval 455 to 465 (GKFTVRMALFQ) is internal hydrophobic patch (IHP). The interval 455-590 (GKFTVRMALF…PTCSGTRFRS (136 aa)) is ZP-C. 3 disulfides stabilise this stretch: Cys-507-Cys-567, Cys-528-Cys-583, and Cys-572-Cys-579. N-linked (GlcNAc...) asparagine glycosylation is present at Asn-514. The essential for cleavage by HPN stretch occupies residues 587–590 (RFRS). An external hydrophobic patch (EHP); regulates polymerization into filaments region spans residues 599–607 (VLNLGPITR). Ala-618 is lipidated: GPI-anchor amidated alanine. Residues 619-642 (SSNLRLLSIWLLLFPSATLIFMVQ) constitute a propeptide, removed in mature form.

In terms of assembly, homodimer that then polymerizes into long filaments. The filaments can additionally assemble laterally to form a sheet. The filaments consist of a zigzag-shaped backbone with laterally protruding arms which interact with bacterial adhesin fimH. Two fimH molecules can bind to a single UMOD monomer. Post-translationally, N-glycosylated. In terms of processing, proteolytically cleaved at a conserved C-terminal proteolytic cleavage site to generate the secreted form found in urine. This cleavage is catalyzed by HPN. Detected in urine (secreted form). Detected in kidney thick ascending limb epithelial cells (at protein level).

It localises to the secreted. The protein resides in the apical cell membrane. It is found in the basolateral cell membrane. Its subcellular location is the cell projection. The protein localises to the cilium membrane. Functions in biogenesis and organization of the apical membrane of epithelial cells of the thick ascending limb of Henle's loop (TALH), where it promotes formation of complex filamentous gel-like structure that may play a role in the water barrier permeability. May serve as a receptor for binding and endocytosis of cytokines (IL-1, IL-2) and TNF. Facilitates neutrophil migration across renal epithelia. In terms of biological role, in the urine, may contribute to colloid osmotic pressure, retards passage of positively charged electrolytes and inhibits formation of liquid containing supersaturated salts and subsequent formation of salt crystals. Protects against urinary tract infections by binding to type 1 fimbriated E.coli. Binds to the bacterial adhesin fimH which mediates the stable formation of bacterial aggregates, prevents the binding of E.coli to uroplakins UPK1A and UPK1B which act as urothelial receptors for type I fimbriae, and allows for pathogen clearance through micturation. Also promotes aggregation of other bacteria including K.pneumoniae, P.aeruginosa and S.mitis and so may also protect against other uropathogens. This is Uromodulin (Umod) from Mus musculus (Mouse).